The chain runs to 412 residues: Subtilisin-like protease 6 (412 aa).

An N-terminal signal peptide occupies residues 1–20 (MGFITKAIPIVLAALSTVNG). Residues 21–127 (ARILEAGPHA…VRTTTNGTNL (107 aa)) constitute a propeptide that is removed on maturation. Residues 36 to 120 (KYIVVMKKDV…FIEPDFVVRT (85 aa)) form the Inhibitor I9 domain. The Peptidase S8 domain occupies 135–412 (SWGLARVGSK…SKLIYNGSGK (278 aa)). Active-site charge relay system residues include D167 and H198. 2 N-linked (GlcNAc...) asparagine glycosylation sites follow: N252 and N264. S358 functions as the Charge relay system in the catalytic mechanism. N-linked (GlcNAc...) asparagine glycosylation occurs at N408.

This sequence belongs to the peptidase S8 family.

Its subcellular location is the secreted. Secreted subtilisin-like serine protease with keratinolytic activity that contributes to pathogenicity. This chain is Subtilisin-like protease 6 (SUB6), found in Arthroderma benhamiae (strain ATCC MYA-4681 / CBS 112371) (Trichophyton mentagrophytes).